The following is a 391-amino-acid chain: Odorant receptor 67d (391 aa).

Topologically, residues 1 to 45 (MLKMAKVEPVERYCKVIRMIRFCVGFCGNDVADPNFRMWWLTYAV) are cytoplasmic. Residues 46 to 66 (MAAIAFFFACTGYTIYVGVVI) traverse the membrane as a helical segment. The Extracellular segment spans residues 67-71 (NGDLT). The chain crosses the membrane as a helical span at residues 72–92 (IILQALAMVGSAVQGLTKLLV). Residues 93–140 (TANNASHMREVQNTYEDIYREYGSKGDEYAKCLEKRIRITWTLLIGFM) are Cytoplasmic-facing. The chain crosses the membrane as a helical span at residues 141 to 161 (LVYIILLGLVITFPIFYLLIL). The Extracellular segment spans residues 162-164 (HQK). A helical membrane pass occupies residues 165-185 (VLVMQFLIPFLDHTTDGGHLI). Topologically, residues 186 to 191 (LTAAHV) are cytoplasmic. Residues 192 to 212 (ILITFGGFGNYGGDMYLFLFV) form a helical membrane-spanning segment. The Extracellular portion of the chain corresponds to 213–268 (THVPLIKDIFCVKLTEFNELVMKRNDFPKVRAMLCDLLVWHQLYTRMLQTTKKIYS). Residues 269–289 (IVLFVQLSTTCVGLLCTISCI) traverse the membrane as a helical segment. At 290–297 (FMKAWPAA) the chain is on the cytoplasmic side. The chain crosses the membrane as a helical span at residues 298-318 (PLYLLYAAITLYTFCGLGTLV). At 319–391 (ENSNEDFLSV…FSMMLMNYLG (73 aa)) the chain is on the extracellular side.

The protein belongs to the insect chemoreceptor superfamily. Heteromeric odorant receptor channel (TC 1.A.69) family. Or67d subfamily. Interacts with Orco. Complexes exist early in the endomembrane system in olfactory sensory neurons (OSNs), coupling these complexes to the conserved ciliary trafficking pathway. Expressed in antenna.

The protein localises to the cell membrane. In terms of biological role, plays a role in detection and sensitivity to pheromones and signal transduction of the fatty-acid-derived male pheromone 11-cis vaccenyl acetate (cVA). Acts in concert with Snmp and lush to capture cVA molecules on the surface of Or67d expressing olfactory dendrites and facilitate their transfer to the odorant-receptor Orco complex. Necessary to mediate behavioral responses to cVA by regulating both male and female mating behavior. Activation of Or67d neurons by cVA inhibits courtship of other males, whereas in females their activation promotes receptivity to other males. May form a complex with Orco to form odorant-sensing units, providing sensitive and prolonged odorant signaling and calcium permeability. The sequence is that of Odorant receptor 67d (Or67d) from Drosophila melanogaster (Fruit fly).